Consider the following 65-residue polypeptide: VESP-VB1 (65 aa).

Positions Met-1–Ala-23 are cleaved as a signal peptide. AXPX repeat units follow at residues Ala-23–Ala-26, Ala-27–Leu-30, Ala-31–Gly-34, Ala-35–Glu-38, Ala-39–Leu-42, Ala-43–Leu-46, and Ala-47–Phe-50. Residues Ala-24 to Pro-49 constitute a propeptide that is removed on maturation. Position 62 is a leucine amide (Leu-62).

Expressed by the venom gland.

The protein resides in the secreted. Functionally, antimicrobial peptide. Shows activity against both Gram-positive (S.aureus MIC=1.0-3.75 ug/ml) and -negative (E.coli MIC=7.5-15 ug/ml) bacteria, as well against fungi (C.albicans MIC=30 ug/ml). Also promotes important mast cell degranulation. Shows little hemolytic activity on rabbit and human erythrocytes. Its mast cell degranulation activity may be related to the activation of G-protein coupled receptors in mast cells as well as interaction with other proteins located in cell endosomal membranes in the mast cells. The chain is VESP-VB1 from Vespa bicolor (Black shield wasp).